A 501-amino-acid chain; its full sequence is Trans-cinnamate 4-monooxygenase (501 aa).

The helical transmembrane segment at 3–23 (LVLLEKALLGLFAAAVLAVAV) threads the bilayer. (E)-cinnamate contacts are provided by residues 213–218 (RSRLSQ) and Ala-302. Cys-443 is a heme binding site.

This sequence belongs to the cytochrome P450 family. Requires heme as cofactor.

It is found in the membrane. The enzyme catalyses (E)-cinnamate + reduced [NADPH--hemoprotein reductase] + O2 = (E)-4-coumarate + oxidized [NADPH--hemoprotein reductase] + H2O + H(+). It functions in the pathway phenylpropanoid metabolism; trans-4-coumarate biosynthesis; trans-4-coumarate from trans-cinnamate: step 1/1. Its function is as follows. Catalyzes the first oxidative step of the phenylpropanoid pathway in higher plants by transforming trans-cinnamate into p-coumarate. The compounds formed by this pathway are essential components for lignification, pollination, and defense against ultraviolet light, predators and pathogens. Can also use 2-naphthoic acid as substrate. This chain is Trans-cinnamate 4-monooxygenase, found in Sorghum bicolor (Sorghum).